Reading from the N-terminus, the 897-residue chain is DNA polymerase I (897 aa).

The 5'-3' exonuclease domain maps to 1–317 (MEQPVIKEGT…ILDNTPALDN (317 aa)). Positions 318 to 494 (APKKSRMIVL…RLCEYFEKGG (177 aa)) constitute a 3'-5' exonuclease domain. Residues 498-896 (DLLTLARDIE…FIAKRWNELK (399 aa)) form a polymerase region.

It belongs to the DNA polymerase type-A family. In terms of assembly, single-chain monomer with multiple functions.

The enzyme catalyses DNA(n) + a 2'-deoxyribonucleoside 5'-triphosphate = DNA(n+1) + diphosphate. In terms of biological role, in addition to polymerase activity, this DNA polymerase exhibits 3'-5' and 5'-3' exonuclease activity. In Helicobacter pylori (strain J99 / ATCC 700824) (Campylobacter pylori J99), this protein is DNA polymerase I (polA).